A 265-amino-acid chain; its full sequence is Small ribosomal subunit protein eS4 (265 aa).

Residues 42-104 (LPLILIIRNR…TGENYRLLYD (63 aa)) form the S4 RNA-binding domain.

Belongs to the eukaryotic ribosomal protein eS4 family.

The protein resides in the cytoplasm. This is Small ribosomal subunit protein eS4 (RPS4) from Oryza sativa subsp. japonica (Rice).